The sequence spans 347 residues: Probable tRNA N6-adenosine threonylcarbamoyltransferase (347 aa).

Positions 109, 113, and 130 each coordinate a divalent metal cation. Substrate-binding positions include 130–134, D162, G177, E181, and N277; that span reads YVSGG. D305 lines the a divalent metal cation pocket.

This sequence belongs to the KAE1 / TsaD family. In terms of assembly, component of the EKC/KEOPS complex; the whole complex dimerizes. A divalent metal cation is required as a cofactor.

Its subcellular location is the cytoplasm. The protein resides in the nucleus. The enzyme catalyses L-threonylcarbamoyladenylate + adenosine(37) in tRNA = N(6)-L-threonylcarbamoyladenosine(37) in tRNA + AMP + H(+). Its function is as follows. Component of the EKC/KEOPS complex that is required for the formation of a threonylcarbamoyl group on adenosine at position 37 (t(6)A37) in tRNAs that read codons beginning with adenine. The complex is probably involved in the transfer of the threonylcarbamoyl moiety of threonylcarbamoyl-AMP (TC-AMP) to the N6 group of A37. Likely plays a direct catalytic role in this reaction, but requires other protein(s) of the complex to fulfill this activity. This Drosophila melanogaster (Fruit fly) protein is Probable tRNA N6-adenosine threonylcarbamoyltransferase.